We begin with the raw amino-acid sequence, 258 residues long: Hydroxyacylglutathione hydrolase cytoplasmic (258 aa).

H54 and H56 together coordinate Zn(2+). The Fe cation site is built by D58 and H59. H112 and D135 together coordinate Zn(2+). A Fe cation-binding site is contributed by D135. Substrate contacts are provided by residues 144 to 146 (KFF) and 174 to 176 (HEY). H174 contributes to the Fe cation binding site.

The protein belongs to the metallo-beta-lactamase superfamily. Glyoxalase II family. As to quaternary structure, homodimer. It depends on Fe(2+) as a cofactor. Zn(2+) serves as cofactor. Requires Fe(3+) as cofactor. Mainly expressed in flowers and flower buds. Also detected in roots and leaves.

It is found in the cytoplasm. The enzyme catalyses an S-(2-hydroxyacyl)glutathione + H2O = a 2-hydroxy carboxylate + glutathione + H(+). It participates in secondary metabolite metabolism; methylglyoxal degradation; (R)-lactate from methylglyoxal: step 2/2. Thiolesterase that catalyzes the hydrolysis of S-D-lactoyl-glutathione to form glutathione and D-lactic acid. The polypeptide is Hydroxyacylglutathione hydrolase cytoplasmic (GLX2-2) (Arabidopsis thaliana (Mouse-ear cress)).